The sequence spans 179 residues: Insulin-like growth factor 2 (179 aa).

The signal sequence occupies residues 1–24 (MGITAGKSMLALLAFLAFASCCYA). The tract at residues 25–52 (AYRPSETLCGGELVDTLQFVCGDRGFYF) is b. Intrachain disulfides connect cysteine 33–cysteine 71, cysteine 45–cysteine 84, and cysteine 70–cysteine 75. Residues 53-64 (SRPSSRINRRSR) form a c region. The interval 65-85 (GIVEECCFRSCDLALLETYCA) is a. The interval 86-91 (APAKSE) is d. A propeptide spans 92–179 (RDVSASTTVL…GGASSEASSD (88 aa)) (e peptide). Threonine 106 is a glycosylation site (O-linked (GalNAc...) threonine). O-linked (GalNAc...) serine glycosylation occurs at serine 154. Residues 160 to 179 (ALPTQDPATHGGASSEASSD) form a disordered region. Threonine 163 carries O-linked (GalNAc...) threonine glycosylation.

It belongs to the insulin family. As to quaternary structure, interacts with MYORG; this interaction is required for IGF2 secretion. Interacts with integrins ITGAV:ITGB3 and ITGA6:ITGB4; integrin-binding is required for IGF2 signaling. Interacts with IGFBP2. In terms of processing, proteolytically processed by PCSK4, proIGF2 is cleaved at Arg-128 and Arg-92 to generate big-IGF2 and mature IGF2.

The protein localises to the secreted. Functionally, the insulin-like growth factors possess growth-promoting activity. Major fetal growth hormone in mammals. Plays a key role in regulating fetoplacental development. IGF2 is influenced by placental lactogen. Also involved in tissue differentiation. In adults, involved in glucose metabolism in adipose tissue, skeletal muscle and liver. Acts as a ligand for integrin which is required for IGF2 signaling. Positively regulates myogenic transcription factor MYOD1 function by facilitating the recruitment of transcriptional coactivators, thereby controlling muscle terminal differentiation. Inhibits myoblast differentiation and modulates metabolism via increasing the mitochondrial respiration rate. Its function is as follows. Preptin undergoes glucose-mediated co-secretion with insulin, and acts as a physiological amplifier of glucose-mediated insulin secretion. Exhibits osteogenic properties by increasing osteoblast mitogenic activity through phosphoactivation of MAPK1 and MAPK3. The sequence is that of Insulin-like growth factor 2 from Ovis aries (Sheep).